Reading from the N-terminus, the 379-residue chain is MSYLLRSDPVSRIHPEPQSLTSFDHFDLLPDSLLLLIFDKVADVKDLGRCCIVSRRFHSLVPFVENVLVRVDCVISDDDSSSSDENHRFSLNTASISDAGGAGGSFSALFRLVFAPIFKPFQMLGQILGPKRSSSSFDASFSAINDEIGVTHHSPTQVLKNFGEIRFLKIELPTGELGIEDGILLKWRADFGSTLDNCMILGASSVIQSNSVKNHENSVDEDNGNIPESFYTNGGLKLRVVWTISSLIAASARHYLLQPIINEHKSLDRLVLSDADGQGVLCMNREQLEELRVTPLSASSASKRTLVPALNMRLWYAPELDLPDGTVLKGATLVAIRPSESKKEVCDASWLSDAFEEPFGTVAKMLIKRRTYCLEMNSF.

The F-box domain maps to 24–72 (DHFDLLPDSLLLLIFDKVADVKDLGRCCIVSRRFHSLVPFVENVLVRVD).

This Arabidopsis thaliana (Mouse-ear cress) protein is F-box protein At1g30200.